The sequence spans 179 residues: Large ribosomal subunit protein uL6 (179 aa).

It belongs to the universal ribosomal protein uL6 family. As to quaternary structure, part of the 50S ribosomal subunit.

Functionally, this protein binds to the 23S rRNA, and is important in its secondary structure. It is located near the subunit interface in the base of the L7/L12 stalk, and near the tRNA binding site of the peptidyltransferase center. This Mycolicibacterium gilvum (strain PYR-GCK) (Mycobacterium gilvum (strain PYR-GCK)) protein is Large ribosomal subunit protein uL6.